The chain runs to 181 residues: ATP-dependent protease subunit HslV (181 aa).

Threonine 6 is an active-site residue. The Na(+) site is built by glycine 162, cysteine 165, and threonine 168.

The protein belongs to the peptidase T1B family. HslV subfamily. In terms of assembly, a double ring-shaped homohexamer of HslV is capped on each side by a ring-shaped HslU homohexamer. The assembly of the HslU/HslV complex is dependent on binding of ATP.

The protein resides in the cytoplasm. The catalysed reaction is ATP-dependent cleavage of peptide bonds with broad specificity.. With respect to regulation, allosterically activated by HslU binding. Functionally, protease subunit of a proteasome-like degradation complex believed to be a general protein degrading machinery. The protein is ATP-dependent protease subunit HslV of Nitratidesulfovibrio vulgaris (strain ATCC 29579 / DSM 644 / CCUG 34227 / NCIMB 8303 / VKM B-1760 / Hildenborough) (Desulfovibrio vulgaris).